A 159-amino-acid chain; its full sequence is MQIDIIAPGRVKERYLRDAIDEYSKRLSRYCKLNIIEVADEKTPDHASEGVDRQIKAREGERIAKHLKDGAFVIALAINGKQLSSEELAAKINDLGLRGTSHIQLVIGGSIGLDDAILRRADFLLSFSKMTFPHQLMRVILLEQIYRAYKINAGEPYHK.

S-adenosyl-L-methionine contacts are provided by residues leucine 76, glycine 108, and 127-132 (FSKMTF).

This sequence belongs to the RNA methyltransferase RlmH family. In terms of assembly, homodimer.

Its subcellular location is the cytoplasm. The catalysed reaction is pseudouridine(1915) in 23S rRNA + S-adenosyl-L-methionine = N(3)-methylpseudouridine(1915) in 23S rRNA + S-adenosyl-L-homocysteine + H(+). In terms of biological role, specifically methylates the pseudouridine at position 1915 (m3Psi1915) in 23S rRNA. This Bifidobacterium longum (strain DJO10A) protein is Ribosomal RNA large subunit methyltransferase H.